The chain runs to 582 residues: Formate--tetrahydrofolate ligase (582 aa).

65 to 72 (TPLGEGKT) contributes to the ATP binding site.

It belongs to the formate--tetrahydrofolate ligase family.

The catalysed reaction is (6S)-5,6,7,8-tetrahydrofolate + formate + ATP = (6R)-10-formyltetrahydrofolate + ADP + phosphate. It functions in the pathway one-carbon metabolism; tetrahydrofolate interconversion. This chain is Formate--tetrahydrofolate ligase, found in Vibrio cholerae serotype O1 (strain ATCC 39315 / El Tor Inaba N16961).